Consider the following 1134-residue polypeptide: Phospholipid-transporting ATPase IH (1134 aa).

Residues 1–61 (MDCSLVRTLV…SSKYTFWNFI (61 aa)) are Cytoplasmic-facing. The chain crosses the membrane as a helical span at residues 62–82 (PKNLFEQFRRVANFYFLIIFL). The Extracellular portion of the chain corresponds to 83-88 (VQLIID). The helical transmembrane segment at 89–110 (TPTSPVTSGLPLFFVITVTAIK) threads the bilayer. Over 111 to 296 (QGYEDWLRHK…SAVEKSMNAF (186 aa)) the chain is Cytoplasmic. The helical transmembrane segment at 297–318 (LIVYLCILISKALINTVLKYMW) threads the bilayer. The Extracellular portion of the chain corresponds to 319–349 (QSEPFRDEPWYNQKTESERQRNLFLKAFTDF). The helical transmembrane segment at 350-372 (LAFMVLFNYIIPVSMYVTVEMQK) threads the bilayer. Residues 373 to 881 (FLGSYFITWD…GHFYYIRISE (509 aa)) are Cytoplasmic-facing. Asp-414 serves as the catalytic 4-aspartylphosphate intermediate. ATP-binding residues include Asp-414, Lys-415, Thr-416, Glu-511, Phe-553, Lys-576, Arg-607, Thr-687, Gly-688, and Asp-689. Asp-414 is a Mg(2+) binding site. Thr-416 contributes to the Mg(2+) binding site. The residue at position 738 (Ser-738) is a Phosphoserine. The ATP site is built by Arg-798 and Lys-804. Asp-825 provides a ligand contact to Mg(2+). ATP-binding residues include Asn-828 and Asp-829. Position 829 (Asp-829) interacts with Mg(2+). The chain crosses the membrane as a helical span at residues 882–902 (LVQYFFYKNVCFIFPQFLYQF). Residues 903–914 (FCGFSQQTLYDT) lie on the Extracellular side of the membrane. The helical transmembrane segment at 915 to 934 (AYLTLYNISFTSLPILLYSL) threads the bilayer. At 935-964 (MEQHVGIDVLKRDPTLYRDVAKNALLRWRV) the chain is on the cytoplasmic side. A helical transmembrane segment spans residues 965-986 (FIYWTLLGLFDALVFFFGAYFV). The Extracellular segment spans residues 987–1000 (FENTTVTSNGQIFG). The helical transmembrane segment at 1001-1023 (NWTFGTLVFTVMVFTVTLKLALD) threads the bilayer. Residues 1024-1029 (THYWTW) are Cytoplasmic-facing. The helical transmembrane segment at 1030–1050 (INHFVIWGSLLFYVVFSLLWG) threads the bilayer. Residues 1051-1068 (GVIWPFLNYQRMYYVFIQ) lie on the Extracellular side of the membrane. The chain crosses the membrane as a helical span at residues 1069-1093 (MLSSGPAWLAIVLLVTISLLPDVLK). The Cytoplasmic portion of the chain corresponds to 1094–1134 (KVLCRQLWPTATERVQTKSQCLSVEQSTIFMLSQTSSSLSF).

This sequence belongs to the cation transport ATPase (P-type) (TC 3.A.3) family. Type IV subfamily. In terms of assembly, component of a P4-ATPase flippase complex which consists of a catalytic alpha subunit ATP11A and an accessory beta subunit TMEM30A. Mg(2+) serves as cofactor. Proteolytically cleaved by CASP3. In terms of tissue distribution, widely expressed. Expressed in myoblasts.

It localises to the cell membrane. Its subcellular location is the early endosome. The protein resides in the recycling endosome. The protein localises to the endoplasmic reticulum membrane. The enzyme catalyses ATP + H2O + phospholipidSide 1 = ADP + phosphate + phospholipidSide 2.. It catalyses the reaction a 1,2-diacyl-sn-glycero-3-phospho-L-serine(out) + ATP + H2O = a 1,2-diacyl-sn-glycero-3-phospho-L-serine(in) + ADP + phosphate + H(+). It carries out the reaction a 1,2-diacyl-sn-glycero-3-phosphoethanolamine(out) + ATP + H2O = a 1,2-diacyl-sn-glycero-3-phosphoethanolamine(in) + ADP + phosphate + H(+). Its activity is regulated as follows. The flippase activity is inactivated by caspase-mediated cleavage in apoptotic cells, allowing for PS exposure on the cell surface and engulfment of apoptotic cells by macrophages. The ATPase activity is up-regulated by aminophospholipids PS and PE and down-regulated by increasing intracellular Ca2+ levels. In terms of biological role, catalytic component of a P4-ATPase flippase complex which catalyzes the hydrolysis of ATP coupled to the transport of aminophospholipids, phosphatidylserines (PS) and phosphatidylethanolamines (PE), from the outer to the inner leaflet of the plasma membrane. Does not show flippase activity toward phosphatidylcholine (PC). Contributes to the maintenance of membrane lipid asymmetry with a specific role in morphogenesis of muscle cells. In myoblasts, mediates PS enrichment at the inner leaflet of plasma membrane, triggering PIEZO1-dependent Ca2+ influx and Rho GTPases signal transduction, subsequently leading to the assembly of cortical actomyosin fibers and myotube formation. May be involved in the uptake of farnesyltransferase inhibitor drugs, such as lonafarnib. This Homo sapiens (Human) protein is Phospholipid-transporting ATPase IH (ATP11A).